Here is an 880-residue protein sequence, read N- to C-terminus: Paramyosin (880 aa).

Residues methionine 1–valine 34 form a nonhelical region region. Residues alanine 35–leucine 859 adopt a coiled-coil conformation. Residues leucine 860 to asparagine 880 form a nonhelical region region.

It belongs to the paramyosin family. Homodimer.

Its subcellular location is the cytoplasm. The protein localises to the myofibril. Functionally, paramyosin is a major structural component of many thick filaments isolated from invertebrate muscles. The protein is Paramyosin of Brugia malayi (Filarial nematode worm).